The sequence spans 600 residues: Long-chain-fatty-acid--CoA ligase FadD15 (600 aa).

It belongs to the ATP-dependent AMP-binding enzyme family.

The enzyme catalyses a long-chain fatty acid + ATP + CoA = a long-chain fatty acyl-CoA + AMP + diphosphate. The catalysed reaction is dodecanoate + ATP + CoA = dodecanoyl-CoA + AMP + diphosphate. It catalyses the reaction hexadecanoate + ATP + CoA = hexadecanoyl-CoA + AMP + diphosphate. It participates in lipid metabolism; fatty acid biosynthesis. In terms of biological role, catalyzes the activation of long-chain fatty acids as acyl-coenzyme A (acyl-CoA), which are then transferred to the multifunctional polyketide synthase (PKS) type III for further chain extension. This chain is Long-chain-fatty-acid--CoA ligase FadD15 (fadD15), found in Mycobacterium tuberculosis (strain ATCC 25618 / H37Rv).